The sequence spans 398 residues: DnaJ-like protein R260 (398 aa).

Residues 7 to 72 enclose the J domain; it reads DLYEILGLTP…EKRRVYDQYG (66 aa). The CR-type zinc finger occupies 118–202; that stretch reads KKTVKVTITV…CKGAGINKSE (85 aa). 4 CXXCXGXG motif repeats span residues 131-138, 147-154, 173-180, and 190-197; these read CDDCDATG, CKVCRGKG, CHGCQGKK, and CPSCKGAG. A disordered region spans residues 364 to 398; it reads LRQINTDPSDESQDRDSEESYGGHGRPEGVGCAQQ. Over residues 371–382 the composition is skewed to acidic residues; that stretch reads PSDESQDRDSEE.

The cofactor is Zn(2+).

This chain is DnaJ-like protein R260, found in Acanthamoeba polyphaga mimivirus (APMV).